A 906-amino-acid polypeptide reads, in one-letter code: Cadherin-2 (906 aa).

The signal sequence occupies residues 1-25 (MCRIVGAPRTLLPLLAALLQASVEA). A propeptide spanning residues 26–159 (SGGIALCKTG…HNGHLQRQKR (134 aa)) is cleaved from the precursor. Phosphoserine occurs at positions 96 and 135. 5 consecutive Cadherin domains span residues 160 to 267 (DWVI…RPEF), 268 to 382 (LHQV…PPEF), 383 to 497 (TAMS…NPYF), 498 to 603 (APNP…DNAP), and 604 to 714 (QVVP…DVDR). Over 160-724 (DWVIPPINLP…IVGAGLGTGA (565 aa)) the chain is Extracellular. Glu-170 lines the Ca(2+) pocket. N-linked (GlcNAc...) asparagine glycosylation is present at Asn-190. Asp-226, Glu-228, Asp-259, Met-260, Asn-261, Asp-262, and Asn-263 together coordinate Ca(2+). Residue Asn-273 is glycosylated (N-linked (GlcNAc...) asparagine). Asp-293, Asp-295, and Asn-301 together coordinate Ca(2+). The N-linked (GlcNAc...) asparagine glycan is linked to Asn-325. Residue Asp-353 coordinates Ca(2+). N-linked (GlcNAc...) asparagine glycosylation is found at Asn-402, Asn-572, Asn-622, Asn-651, and Asn-692. A helical membrane pass occupies residues 725–745 (IIAILLCIIILLILVLMFVVW). Residues 746 to 906 (MKRRDKERQA…LADMYGGGDD (161 aa)) are Cytoplasmic-facing. The span at 863 to 880 (SGSTAGSLSSLNSSSSGG) shows a compositional bias: low complexity. The tract at residues 863-884 (SGSTAGSLSSLNSSSSGGEQDY) is disordered.

As to quaternary structure, homodimer (via extracellular region). Can also form heterodimers with other cadherins (via extracellular region). Dimerization occurs in trans, i.e. with a cadherin chain from another cell. Interacts with CDCP1. Interacts with PCDH8; this complex may also include TAOK2. The interaction with PCDH8 may lead to internalization through TAOK2/p38 MAPK pathway. Identified in a complex containing FGFR4, NCAM1, CDH2, PLCG1, FRS2, SRC, SHC1, GAP43 and CTTN. May interact with OBSCN (via protein kinase domain 2). Interacts with FBXO45. Cleaved by MMP24. Ectodomain cleavage leads to the generation of a soluble 90 kDa N-terminal soluble fragment and a 45 kDa membrane-bound C-terminal fragment 1 (CTF1), which is further cleaved by gamma-secretase into a 35 kDa. Cleavage in neural stem cells by MMP24 affects CDH2-mediated anchorage of neural stem cells to ependymocytes in the adult subependymal zone, leading to modulate neural stem cell quiescence. In terms of processing, may be phosphorylated by OBSCN.

It localises to the cell membrane. It is found in the sarcolemma. The protein localises to the cell junction. Its subcellular location is the cell surface. The protein resides in the desmosome. It localises to the adherens junction. Calcium-dependent cell adhesion protein; preferentially mediates homotypic cell-cell adhesion by dimerization with a CDH2 chain from another cell. Cadherins may thus contribute to the sorting of heterogeneous cell types. Acts as a regulator of neural stem cells quiescence by mediating anchorage of neural stem cells to ependymocytes in the adult subependymal zone: upon cleavage by MMP24, CDH2-mediated anchorage is affected, leading to modulate neural stem cell quiescence. Plays a role in cell-to-cell junction formation between pancreatic beta cells and neural crest stem (NCS) cells, promoting the formation of processes by NCS cells. CDH2 may be involved in neuronal recognition mechanism. In hippocampal neurons, may regulate dendritic spine density. This Rhinolophus ferrumequinum (Greater horseshoe bat) protein is Cadherin-2 (CDH2).